The sequence spans 96 residues: Large ribosomal subunit protein uL23 (96 aa).

It belongs to the universal ribosomal protein uL23 family. In terms of assembly, part of the 50S ribosomal subunit. Contacts protein L29, and trigger factor when it is bound to the ribosome.

One of the early assembly proteins it binds 23S rRNA. One of the proteins that surrounds the polypeptide exit tunnel on the outside of the ribosome. Forms the main docking site for trigger factor binding to the ribosome. The sequence is that of Large ribosomal subunit protein uL23 from Bacillus mycoides (strain KBAB4) (Bacillus weihenstephanensis).